We begin with the raw amino-acid sequence, 22 residues long: Peptide PGLa-B1 (22 aa).

Leu-22 carries the post-translational modification Leucine amide.

In terms of tissue distribution, expressed by the skin glands.

Its subcellular location is the secreted. Its function is as follows. Has antibacterial and antifungal activity. The chain is Peptide PGLa-B1 from Xenopus borealis (Kenyan clawed frog).